The primary structure comprises 217 residues: tRNA (guanine-N(7)-)-methyltransferase (217 aa).

E44, E69, D96, and D118 together coordinate S-adenosyl-L-methionine. Residue D118 is part of the active site. Substrate-binding positions include K122, D154, and 191–194 (TEYE).

The protein belongs to the class I-like SAM-binding methyltransferase superfamily. TrmB family.

The enzyme catalyses guanosine(46) in tRNA + S-adenosyl-L-methionine = N(7)-methylguanosine(46) in tRNA + S-adenosyl-L-homocysteine. It participates in tRNA modification; N(7)-methylguanine-tRNA biosynthesis. Its function is as follows. Catalyzes the formation of N(7)-methylguanine at position 46 (m7G46) in tRNA. This chain is tRNA (guanine-N(7)-)-methyltransferase, found in Bacillus mycoides (strain KBAB4) (Bacillus weihenstephanensis).